The following is a 775-amino-acid chain: Serine/threonine-protein kinase-like protein CCR1 (775 aa).

The N-terminal stretch at 1–23 (METRCSLLFLSLILLYLPKPGSG) is a signal peptide. At 24–439 (FGSSGPIAAS…DKHWHQLQRL (416 aa)) the chain is on the extracellular side. Asparagine 57, asparagine 102, asparagine 167, asparagine 213, asparagine 220, asparagine 241, asparagine 261, asparagine 292, asparagine 328, and asparagine 360 each carry an N-linked (GlcNAc...) asparagine glycan. The stretch at 351-406 (PCNEKEFAFNASILNEPDLTSLCVRKELMVCSPCGSDCSHGFFLSSSCTANSDRIC) is one TNFR-Cys repeat. Intrachain disulfides connect cysteine 352/cysteine 381, cysteine 384/cysteine 398, and cysteine 388/cysteine 406. N-linked (GlcNAc...) asparagine glycosylation occurs at asparagine 414. The helical transmembrane segment at 440-460 (VLIIGSCASALLIIIIGCCVV) threads the bilayer. The Cytoplasmic segment spans residues 461–775 (PRIVTSPNKE…EHVARDALIF (315 aa)). The 251-residue stretch at 520–770 (FKEFNELGRG…LANWLEHVAR (251 aa)) folds into the Protein kinase domain. Residues 526–534 (LGRGSYGFV) and lysine 548 contribute to the ATP site. Aspartate 645 functions as the Proton acceptor in the catalytic mechanism.

The protein belongs to the protein kinase superfamily. Ser/Thr protein kinase family. In terms of assembly, homodimer. As to expression, expressed in roots, leaves, shoot apical meristems (SAM), and floral buds.

It localises to the membrane. The enzyme catalyses L-seryl-[protein] + ATP = O-phospho-L-seryl-[protein] + ADP + H(+). It catalyses the reaction L-threonyl-[protein] + ATP = O-phospho-L-threonyl-[protein] + ADP + H(+). In terms of biological role, serine/threonine-protein kinase with low activity. This is Serine/threonine-protein kinase-like protein CCR1 (CCR1) from Arabidopsis thaliana (Mouse-ear cress).